A 284-amino-acid chain; its full sequence is Ubiquinone biosynthesis protein COQ4, mitochondrial (284 aa).

Zn(2+) is bound by residues histidine 165, aspartate 166, histidine 169, and glutamate 181.

It belongs to the COQ4 family. As to quaternary structure, component of a multi-subunit COQ enzyme complex, composed of at least COQ3, COQ4, COQ5, COQ6, COQ7 and COQ9. Requires Zn(2+) as cofactor.

The protein localises to the mitochondrion inner membrane. The catalysed reaction is a 4-hydroxy-3-methoxy-5-(all-trans-polyprenyl)benzoate + H(+) = a 2-methoxy-6-(all-trans-polyprenyl)phenol + CO2. It participates in cofactor biosynthesis; ubiquinone biosynthesis. Lyase that catalyzes the C1-decarboxylation of 4-hydroxy-3-methoxy-5-(all-trans-polyprenyl)benzoic acid into 2-methoxy-6-(all-trans-polyprenyl)phenol during ubiquinone biosynthesis. In Ajellomyces dermatitidis (strain ER-3 / ATCC MYA-2586) (Blastomyces dermatitidis), this protein is Ubiquinone biosynthesis protein COQ4, mitochondrial.